A 500-amino-acid polypeptide reads, in one-letter code: Plasma protease C1 inhibitor (500 aa).

An N-terminal signal peptide occupies residues 1 to 22 (MASRLTLLTLLLLLLAGDRASS). Positions 20–31 (ASSNPNATSSSS) are enriched in low complexity. The segment at 20–43 (ASSNPNATSSSSQDPESLQDRGEG) is disordered. The N-linked (GlcNAc...) (complex) asparagine glycan is linked to Asn25. 2 O-linked (GalNAc...) threonine glycosylation sites follow: Thr47 and Thr48. O-linked (GalNAc...) serine glycosylation is present at Ser64. Positions 65 to 118 (LPTTNSTTNSATKITANTTDEPTTQPTTEPTTQPTIQPTQPTTQLPTDSPTQPT) are disordered. Residues 67–118 (TTNSTTNSATKITANTTDEPTTQPTTEPTTQPTIQPTQPTTQLPTDSPTQPT) show a composition bias toward low complexity. Asn69 carries an N-linked (GlcNAc...) asparagine glycan. A glycan (O-linked (GalNAc...) threonine) is linked at Thr71. Asn81 is a glycosylation site (N-linked (GlcNAc...) asparagine). 4 O-linked (GalNAc...) threonine glycosylation sites follow: Thr83, Thr88, Thr92, and Thr96. 7 tandem repeats follow at residues 85–88 (EPTT), 89–92 (QPTT), 93–96 (EPTT), 97–100 (QPTI), 101–104 (QPTQ), 105–108 (PTTQ), and 116–119 (QPTT). Positions 85-119 (EPTTQPTTEPTTQPTIQPTQPTTQLPTDSPTQPTT) are 7 X 4 AA tandem repeats of [QE]-P-T-[TQ]. Cystine bridges form between Cys123–Cys428 and Cys130–Cys205. N-linked (GlcNAc...) (complex) asparagine glycans are attached at residues Asn238 and Asn253. A glycan (N-linked (GlcNAc...) asparagine; in variant TA) is linked at Asn272. N-linked (GlcNAc...) (complex) asparagine glycosylation occurs at Asn352.

It belongs to the serpin family. As to quaternary structure, interacts with MASP1. In terms of assembly, (Microbial infection) Binds to E.coli stcE which allows localization of SERPING1 to cell membranes thus protecting the bacteria against complement-mediated lysis. In terms of processing, highly glycosylated (49%) with N- and O-glycosylation. O-glycosylated with core 1 or possibly core 8 glycans. N-glycan heterogeneity at Asn-25: Hex5HexNAc4 (minor), dHex1Hex5HexNAc4 (minor), Hex6HexNAc5 (major) and dHex1Hex6HexNAc5 (minor). Post-translationally, cleaved by C1S in vitro. (Microbial infection) Can be proteolytically cleaved by E.coli stcE.

Its subcellular location is the secreted. Serine protease inhibitor, which acrs as a regulator of the classical complement pathway. Forms a proteolytically inactive stoichiometric complex with the C1r or C1s proteases. May also regulate blood coagulation, fibrinolysis and the generation of kinins. Very efficient inhibitor of FXIIa. Inhibits chymotrypsin and kallikrein. In Homo sapiens (Human), this protein is Plasma protease C1 inhibitor (SERPING1).